The primary structure comprises 122 residues: MIKKLDRDAARQKKHMRIRKRVKGTEERPRLCVFRSLNHIYAQVVNDVTGRTLVAASSLDGEFKAANVSGGNIEGAKKVGELIAKKALEKGIDKVVFDRGGYIYHGRIAALAEAAREAGLQF.

Belongs to the universal ribosomal protein uL18 family. Part of the 50S ribosomal subunit; part of the 5S rRNA/L5/L18/L25 subcomplex. Contacts the 5S and 23S rRNAs.

This is one of the proteins that bind and probably mediate the attachment of the 5S RNA into the large ribosomal subunit, where it forms part of the central protuberance. The protein is Large ribosomal subunit protein uL18 of Heliobacterium modesticaldum (strain ATCC 51547 / Ice1).